Here is a 369-residue protein sequence, read N- to C-terminus: Anhydro-N-acetylmuramic acid kinase (369 aa).

Residue 12 to 19 (GTSLDGVD) coordinates ATP.

This sequence belongs to the anhydro-N-acetylmuramic acid kinase family.

It catalyses the reaction 1,6-anhydro-N-acetyl-beta-muramate + ATP + H2O = N-acetyl-D-muramate 6-phosphate + ADP + H(+). Its pathway is amino-sugar metabolism; 1,6-anhydro-N-acetylmuramate degradation. It functions in the pathway cell wall biogenesis; peptidoglycan recycling. Catalyzes the specific phosphorylation of 1,6-anhydro-N-acetylmuramic acid (anhMurNAc) with the simultaneous cleavage of the 1,6-anhydro ring, generating MurNAc-6-P. Is required for the utilization of anhMurNAc either imported from the medium or derived from its own cell wall murein, and thus plays a role in cell wall recycling. The sequence is that of Anhydro-N-acetylmuramic acid kinase from Escherichia coli O6:K15:H31 (strain 536 / UPEC).